Reading from the N-terminus, the 141-residue chain is Large ribosomal subunit protein uL11 (141 aa).

It belongs to the universal ribosomal protein uL11 family. In terms of assembly, part of the ribosomal stalk of the 50S ribosomal subunit. Interacts with L10 and the large rRNA to form the base of the stalk. L10 forms an elongated spine to which L12 dimers bind in a sequential fashion forming a multimeric L10(L12)X complex. Post-translationally, one or more lysine residues are methylated.

Forms part of the ribosomal stalk which helps the ribosome interact with GTP-bound translation factors. The polypeptide is Large ribosomal subunit protein uL11 (Chlorobium chlorochromatii (strain CaD3)).